Here is a 450-residue protein sequence, read N- to C-terminus: UDP-N-acetylmuramoylalanine--D-glutamate ligase (450 aa).

Residue 119-125 participates in ATP binding; the sequence is GSNGKTT.

This sequence belongs to the MurCDEF family.

It is found in the cytoplasm. It carries out the reaction UDP-N-acetyl-alpha-D-muramoyl-L-alanine + D-glutamate + ATP = UDP-N-acetyl-alpha-D-muramoyl-L-alanyl-D-glutamate + ADP + phosphate + H(+). Its pathway is cell wall biogenesis; peptidoglycan biosynthesis. Its function is as follows. Cell wall formation. Catalyzes the addition of glutamate to the nucleotide precursor UDP-N-acetylmuramoyl-L-alanine (UMA). In Streptococcus pneumoniae (strain ATCC BAA-255 / R6), this protein is UDP-N-acetylmuramoylalanine--D-glutamate ligase.